The primary structure comprises 379 residues: Protein PatA (379 aa).

A disordered region spans residues 181–226 (RREASSQEISSSTEHNQIPVNNRRSTKFTSPPHTQPKPEPRLPQIN). The span at 186-212 (SQEISSSTEHNQIPVNNRRSTKFTSPP) shows a compositional bias: polar residues. The 117-residue stretch at 262 to 378 (TIFCIDENPI…DLLKVIFKHI (117 aa)) folds into the Response regulatory domain. A 4-aspartylphosphate modification is found at Asp-313.

Its subcellular location is the cell septum. Controls heterocyst pattern formation. Required for the differentiation of intercalary heterocysts but not for terminal heterocysts. The chain is Protein PatA (patA) from Nostoc sp. (strain PCC 7120 / SAG 25.82 / UTEX 2576).